A 910-amino-acid polypeptide reads, in one-letter code: Auxilin (910 aa).

3 tandem repeats follow at residues 33-36 (NLKD), 37-40 (NLKD), and 41-44 (TLKD). Residues 33–44 (NLKDNLKDTLKD) are 3 X 4 AA approximate tandem repeats. The Phosphatase tensin-type domain occupies 52–219 (SVTSYTKGDL…GYMCDLLADK (168 aa)). At Ser-109 the chain carries Phosphoserine. Cys-161 serves as the catalytic Phosphocysteine intermediate. The region spanning 225-363 (FKPLTIKSIT…FQVTLDVELQ (139 aa)) is the C2 tensin-type domain. The short motif at 406–414 (PIDIPPDNP) is the SH3-binding element. The segment at 448–772 (QESEQSDDEL…RGKAAANLEG (325 aa)) is disordered. Phosphoserine is present on residues Ser-450, Ser-453, Ser-560, and Ser-567. Residues 547–569 (PSGPTSTQSTPRRSATSTSASPT) are compositionally biased toward low complexity. The span at 596 to 626 (FLNTASASSDPFLQPTRSPSPTVHASSTPAV) shows a compositional bias: polar residues. A compositionally biased stretch (low complexity) spans 651 to 666 (SAATSPTGSSHGTPTH). Residues 715 to 725 (MGGGWQQGGGY) show a composition bias toward gly residues. Polar residues predominate over residues 732-758 (SKPQSSMPHSSPQNRPNYNVSFSSMPG). The region spanning 846–910 (TKWKPVGMAD…FENQGQKPLY (65 aa)) is the J domain.

In terms of assembly, forms a complex composed of HSPA8, CLTC and DNAJC6. Interacts with HSPA8/HSC70 in an ATP-dependent manner; this interaction stimulates the HSPA8's ATPase activity. Interacts with CLTC; this interaction produces a local change in heavy-chain contacts, creating a detectable global distortion of the clathrin coat. Interacts with AP2A2. Interacts with DNM1(GTP-bound form); this interaction allows clathrin-coated vesicle (CCV) formation at the plasma membrane. Post-translationally, the N-terminus is blocked. Phosphorylation at Ser-567 modulates its ability to bind CLTC and therefore the synaptic vesicle endocytosis (SVE). Brain.

It localises to the cytoplasmic vesicle. Its subcellular location is the clathrin-coated vesicle. Its function is as follows. May act as a protein phosphatase and/or a lipid phosphatase. Co-chaperone that recruits HSPA8/HSC70 to clathrin-coated vesicles (CCVs) and promotes the ATP-dependent dissociation of clathrin from CCVs and participates in clathrin-mediated endocytosis of synaptic vesicles and their recycling and also in intracellular trafficking. Firstly, binds tightly to the clathrin cages, at a ratio of one DNAJC6 per clathrin triskelion. The HSPA8:ATP complex then binds to the clathrin-auxilin cage, initially at a ratio of one HSPA8 per triskelion leading to ATP hydrolysis stimulation and causing a conformational change in the HSPA8. This cycle is repeated three times to drive to a complex containing the clathrin-auxilin cage associated to three HSPA8:ADP complex. The ATP hydrolysis of the third HSPA8:ATP complex leads to a concerted dismantling of the cage into component triskelia. Then, dissociates from the released triskelia and be recycled to initiate another cycle of HSPA8's recruitment. Also acts during the early steps of clathrin-coated vesicle (CCV) formation through its interaction with the GTP bound form of DNM1. The chain is Auxilin from Bos taurus (Bovine).